The sequence spans 151 residues: Macrodomain Ter protein (151 aa).

The protein belongs to the MatP family. As to quaternary structure, homodimer.

Its subcellular location is the cytoplasm. Its function is as follows. Required for spatial organization of the terminus region of the chromosome (Ter macrodomain) during the cell cycle. Prevents early segregation of duplicated Ter macrodomains during cell division. Binds specifically to matS, which is a 13 bp signature motif repeated within the Ter macrodomain. The polypeptide is Macrodomain Ter protein (Vibrio atlanticus (strain LGP32) (Vibrio splendidus (strain Mel32))).